A 72-amino-acid chain; its full sequence is Movement protein TGBp3 (72 aa).

Over 1–2 the chain is Lumenal; the sequence is MS. The helical transmembrane segment at 3–23 threads the bilayer; sequence LSFSLIVFAVGVAVSIGVLTL. The Cytoplasmic portion of the chain corresponds to 24 to 72; that stretch reads TTQQSSSYCLILVDGAKAVVEGCHLRQDIPAILSELKPASSPFNPLFCS.

This sequence belongs to the Tymovirales TGBp3 protein family.

It localises to the host endoplasmic reticulum membrane. Functionally, plays a role in viral cell-to-cell propagation, by facilitating genome transport to neighboring plant cells through plasmosdesmata. May induce the formation of granular vesicles derived from the Endoplasmic reticulum, which align on actin filaments. The sequence is that of Movement protein TGBp3 (ORF4) from Lolium latent virus (isolate Lolium/USA/US1/-) (LoLV).